The sequence spans 554 residues: uncharacterized protein (554 aa).

It to M.jannaschii MJ0047, MJ0162 and MJ1236.

This is an uncharacterized protein from Synechocystis sp. (strain ATCC 27184 / PCC 6803 / Kazusa).